Here is a 353-residue protein sequence, read N- to C-terminus: Putative transcription factor MTF1 (353 aa).

Composition is skewed to polar residues over residues 11–26 (VTRS…TSPA) and 36–58 (EPSN…QQGN). Disordered stretches follow at residues 11–96 (VTRS…ALPC) and 129–174 (FTTT…TTNP). 2 stretches are compositionally biased toward low complexity: residues 59-95 (TEAS…PALP) and 133-145 (NSSP…SPSS). Residues 148–164 (SHTRKNSKYTVRHHRTR) show a composition bias toward basic residues. The span at 165–174 (QSSFNGTTNP) shows a compositional bias: polar residues.

It is found in the nucleus. In terms of biological role, may be involved in transcriptional activation. In Mucor circinelloides f. lusitanicus (Mucor racemosus var. lusitanicus), this protein is Putative transcription factor MTF1 (MTF1).